The following is a 431-amino-acid chain: Adenylosuccinate synthetase (431 aa).

GTP-binding positions include 13–19 and 41–43; these read GDEGKGK and GHT. Asp14 acts as the Proton acceptor in catalysis. Mg(2+) is bound by residues Asp14 and Gly41. IMP is bound by residues 14–17, 39–42, Thr130, Arg144, Gln225, Thr240, and Arg304; these read DEGK and NAGH. His42 acts as the Proton donor in catalysis. Substrate is bound at residue 300-306; it reads ATTGRKR. Residues Arg306, 332–334, and 415–417 contribute to the GTP site; these read KLD and STG.

The protein belongs to the adenylosuccinate synthetase family. In terms of assembly, homodimer. Requires Mg(2+) as cofactor.

The protein resides in the cytoplasm. The enzyme catalyses IMP + L-aspartate + GTP = N(6)-(1,2-dicarboxyethyl)-AMP + GDP + phosphate + 2 H(+). It participates in purine metabolism; AMP biosynthesis via de novo pathway; AMP from IMP: step 1/2. Its function is as follows. Plays an important role in the de novo pathway of purine nucleotide biosynthesis. Catalyzes the first committed step in the biosynthesis of AMP from IMP. The sequence is that of Adenylosuccinate synthetase from Shewanella halifaxensis (strain HAW-EB4).